A 102-amino-acid polypeptide reads, in one-letter code: Large ribosomal subunit protein uL24 (102 aa).

This sequence belongs to the universal ribosomal protein uL24 family. As to quaternary structure, part of the 50S ribosomal subunit.

Functionally, one of two assembly initiator proteins, it binds directly to the 5'-end of the 23S rRNA, where it nucleates assembly of the 50S subunit. In terms of biological role, one of the proteins that surrounds the polypeptide exit tunnel on the outside of the subunit. In Allorhizobium ampelinum (strain ATCC BAA-846 / DSM 112012 / S4) (Agrobacterium vitis (strain S4)), this protein is Large ribosomal subunit protein uL24.